Here is a 351-residue protein sequence, read N- to C-terminus: MGKLQDGIAIKRINDAITTFKNYKLGELKQGGSMAINTLSNVRAHVGLAWPAILRNCLIHTSSHLGFMKFMIDIATTWKVGAFTLLGSVGDEDPFTDVDLIYTKTCLHLGLKDNDFLQFPEEFAYEANSFLEAQSMNAKVDMLTGVHNIEDKYVFRMQSISKFLKAYYTASEDVAYLTGFIKPDDSKDSILNAELLEAQVTSEVLRVRNLITTKIQKYINLYEDSQLPHFRQAALSYIQDWDVDGGVPAALPQPDTTDDERPVTKPGPSTPTVSKGVDEPEDEEMIRKKVETSKDAPSKADPPGNVSPRGVPALLEDDMSEMDMPDGFHDYLTREHENNFDLSQLGLAPSV.

The disordered stretch occupies residues 246-330 (GVPAALPQPD…EMDMPDGFHD (85 aa)). A compositionally biased stretch (basic and acidic residues) spans 285 to 298 (MIRKKVETSKDAPS). The span at 315 to 324 (LEDDMSEMDM) shows a compositional bias: acidic residues.

Belongs to the phytoreovirus minor outer capsid protein P9 family.

The protein resides in the virion. It is found in the host cytoplasm. Its function is as follows. Minor outer capsid protein. The polypeptide is Minor outer capsid protein P9 (Alopecurus aequalis (Barnyard grass)).